Reading from the N-terminus, the 331-residue chain is 6-phosphogluconolactonase (331 aa).

It belongs to the cycloisomerase 2 family.

It catalyses the reaction 6-phospho-D-glucono-1,5-lactone + H2O = 6-phospho-D-gluconate + H(+). It functions in the pathway carbohydrate degradation; pentose phosphate pathway; D-ribulose 5-phosphate from D-glucose 6-phosphate (oxidative stage): step 2/3. Functionally, catalyzes the hydrolysis of 6-phosphogluconolactone to 6-phosphogluconate. The sequence is that of 6-phosphogluconolactonase from Salmonella paratyphi A (strain ATCC 9150 / SARB42).